Here is a 156-residue protein sequence, read N- to C-terminus: Endoribonuclease YbeY (156 aa).

The Zn(2+) site is built by H117, H121, and H127.

This sequence belongs to the endoribonuclease YbeY family. It depends on Zn(2+) as a cofactor.

Its subcellular location is the cytoplasm. Functionally, single strand-specific metallo-endoribonuclease involved in late-stage 70S ribosome quality control and in maturation of the 3' terminus of the 16S rRNA. The polypeptide is Endoribonuclease YbeY (Herminiimonas arsenicoxydans).